An 802-amino-acid chain; its full sequence is Oligophrenin-1 (802 aa).

The PH domain occupies 265-368 (QPTIEGYLYT…WMEAMDGKEP (104 aa)). Residues 380–564 (MELNEVGFKF…ILIEHFGKIY (185 aa)) enclose the Rho-GAP domain. Disordered stretches follow at residues 641 to 663 (QKSG…CQTE) and 682 to 802 (TKAI…GDES). The span at 716-732 (HHKEGDTDCFSKVRPPG) shows a compositional bias: basic and acidic residues. The span at 751-768 (SSTSQKPESKPETVSSNA) shows a compositional bias: polar residues.

Interacts with HOMER1. Interacts with AMPA receptor complexes. Interacts with SH3GL2 (endophilin-A1). Interacts (via C-terminus) with NR1D1. In terms of tissue distribution, high expression in brain, particularly in the cerebellum, hippocampus, thalamus, frontal lobes, sensory cortex. Found in the myelin sheaths of peripheral nerves, chromaffin cells within the adrenal medulla, and in extra-adrenal chromaffin cells associated with celiac ganglia.

The protein resides in the postsynapse. The protein localises to the presynapse. It localises to the cell projection. Its subcellular location is the axon. It is found in the dendritic spine. The protein resides in the dendrite. The protein localises to the cytoplasm. Functionally, stimulates GTP hydrolysis of members of the Rho family. Its action on RHOA activity and signaling is implicated in growth and stabilization of dendritic spines, and therefore in synaptic function, in hippocampal neurons. Critical for the stabilization of AMPA receptors at postsynaptic sites. Critical for the regulation of synaptic vesicle endocytosis at pre-synaptic terminals. Required for the localization of NR1D1 to dendrites, can suppress its repressor activity and protect it from proteasomal degradation. The polypeptide is Oligophrenin-1 (Ophn1) (Rattus norvegicus (Rat)).